Here is a 161-residue protein sequence, read N- to C-terminus: MSYDLATAERAAYAPFFGYMGAASAQIFTVLGAAYGTAKSAVGISSMGVMRPELIMKSVIPVIMAGIIGIYGLVVAMVLRGKVTSASAGYTLDKGFAHLAAGLTCGLCGLGAGYAIGIVGDAGVRGTAQQPRLFVGMILILIFSEVLGLYGMIVALILGTS.

Topologically, residues 1–15 are lumenal; it reads MSYDLATAERAAYAP. The chain crosses the membrane as a helical span at residues 16 to 36; it reads FFGYMGAASAQIFTVLGAAYG. Residues 37-58 lie on the Cytoplasmic side of the membrane; that stretch reads TAKSAVGISSMGVMRPELIMKS. The helical transmembrane segment at 59–79 threads the bilayer; it reads VIPVIMAGIIGIYGLVVAMVL. Residues 80–98 lie on the Lumenal side of the membrane; it reads RGKVTSASAGYTLDKGFAH. A helical membrane pass occupies residues 99 to 119; sequence LAAGLTCGLCGLGAGYAIGIV. The Cytoplasmic segment spans residues 120 to 137; sequence GDAGVRGTAQQPRLFVGM. The helical transmembrane segment at 138 to 158 threads the bilayer; it reads ILILIFSEVLGLYGMIVALIL. Residues 159–161 are Lumenal-facing; that stretch reads GTS.

Belongs to the V-ATPase proteolipid subunit family. In terms of assembly, V-ATPase is a heteromultimeric enzyme made up of two complexes: the ATP-hydrolytic V1 complex and the proton translocation V0 complex. The V1 complex consists of three catalytic AB heterodimers that form a heterohexamer, three peripheral stalks each consisting of EG heterodimers, one central rotor including subunits D and F, and the regulatory subunits C and H. The proton translocation complex V0 consists of the proton transport subunit a, a ring of proteolipid subunits c9c'', rotary subunit d, subunits e and f, and the accessory subunits vah-19/Ac45 and vah-20/PRR.

It localises to the membrane. Its function is as follows. Proton-conducting pore forming subunit of the V0 complex of vacuolar(H+)-ATPase (V-ATPase), a multisubunit enzyme composed of a peripheral complex (V1) that hydrolyzes ATP and a membrane integral complex (V0) that translocates protons. V-ATPase is responsible for acidifying and maintaining the pH of intracellular compartments and in some cell types, is targeted to the plasma membrane, where it is responsible for acidifying the extracellular environment. This Ascaris suum (Pig roundworm) protein is V-type proton ATPase 16 kDa proteolipid subunit c (12).